The chain runs to 217 residues: Ependymin (217 aa).

An N-terminal signal peptide occupies residues 1-20 (MHTVKLLCVVFSCLCAIGWA). Residues Asn-73 and Asn-96 are each glycosylated (N-linked (GlcNAc...) asparagine).

The protein belongs to the ependymin family. In terms of assembly, forms disulfide-linked dimers. Post-translationally, binds calcium through the terminal sialic acids. EPDs are synthesized in the meninx and secreted in the cerebrospinal fluid.

It is found in the secreted. In terms of biological role, may play a role in neural plasticity. May be involved during axon regeneration. This chain is Ependymin (epd), found in Danio rerio (Zebrafish).